The sequence spans 251 residues: Small ribosomal subunit protein uS3 (251 aa).

The 74-residue stretch at 39–112 folds into the KH type-2 domain; it reads IRKYINEVYA…NIILNVVEVR (74 aa). Residues 222 to 251 are disordered; the sequence is EEKKPAKKFNKKPVAAKPANKEEKSSKEVK. The span at 240-251 shows a compositional bias: basic and acidic residues; sequence ANKEEKSSKEVK.

The protein belongs to the universal ribosomal protein uS3 family. In terms of assembly, part of the 30S ribosomal subunit. Forms a tight complex with proteins S10 and S14.

Binds the lower part of the 30S subunit head. Binds mRNA in the 70S ribosome, positioning it for translation. The polypeptide is Small ribosomal subunit protein uS3 (Anaeroplasma abactoclasticum).